Here is a 481-residue protein sequence, read N- to C-terminus: Protein hedgehog (481 aa).

The N-palmitoyl cysteine moiety is linked to residue Cys93. The Ca(2+) site is built by Glu157, Glu158, Asp163, Thr193, Glu194, Asp197, and Asp199. A lipid anchor (Cholesterol glycine ester) is attached at Gly265.

The protein belongs to the hedgehog family. Interacts with shf. In terms of processing, the C-terminal part of the hedgehog protein precursor displays an autoproteolysis activity that results in the cleavage of the full-length protein into two parts (N-product and C-product). In addition, the C-terminal part displays a cholesterol transferase activity that results by the covalent attachment of a cholesterol moiety to the C-terminal of the newly generated N-product. The N-product is the active species in both local and long-range signaling, whereas the C-product has no signaling activity. Cholesterylation is required for N-product targeting to lipid rafts and multimerization. Post-translationally, N-palmitoylation by Rasp of the hedgehog N-product, within the secretory pathway, is required for the embryonic and larval patterning activities of the hedgehog signal.

It localises to the nucleus. The protein resides in the cytoplasm. The protein localises to the cell membrane. The enzyme catalyses glycyl-L-cysteinyl-[protein] + cholesterol + H(+) = [protein]-C-terminal glycyl cholesterol ester + N-terminal L-cysteinyl-[protein]. The C-terminal part of the hedgehog protein precursor displays an autoproteolysis activity that results in the cleavage of the full-length protein into two parts (N-product and C-product). In addition, the C-terminal part displays a cholesterol transferase activity that results by the covalent attachment of a cholesterol moiety to the C-terminal of the newly generated N-product. Once cleaved, the C-product has no signaling activity and diffuses from the cell. In terms of biological role, the dually lipidated hedgehog protein N-product is a morphogen which is essential for a variety of patterning events during development. Establishes the anterior-posterior axis of the embryonic segments and patterns the larval imaginal disks. Binds to the patched (ptc) receptor, which functions in association with smoothened (smo), to activate the transcription of target genes wingless (wg), decapentaplegic (dpp) and ptc. In the absence of hh, ptc represses the constitutive signaling activity of smo through fused (fu). Essential component of a signaling pathway which regulates the Duox-dependent gut immune response to bacterial uracil; required to activate Cad99C-dependent endosome formation, norpA-dependent Ca2+ mobilization and p38 MAPK, which are essential steps in the Duox-dependent production of reactive oxygen species (ROS) in response to intestinal bacterial infection. During photoreceptor differentiation, it up-regulates transcription of Ubr3, which in turn promotes the hh-signaling pathway by mediating the ubiquitination and degradation of cos. This is Protein hedgehog from Drosophila persimilis (Fruit fly).